The following is a 534-amino-acid chain: Solute carrier family 22 member 15 (534 aa).

A helical transmembrane segment spans residues 22 to 42 (FLLAVLLQLYSATEAIIITIL). 3 N-linked (GlcNAc...) asparagine glycosylation sites follow: Asn-52, Asn-58, and Asn-83. 11 helical membrane passes run 97-117 (AAYEVSVSSSVYFGGVLIGVI), 136-156 (LALEVVFAVMNALTPIFPLFL), 161-181 (LVGVMNGGMSLVAFVLLNECI), 191-211 (SLGSLCFAVGIAQFALIGYFI), 216-236 (LLALLVNVQGAAVLALSLCIP), 297-317 (TLIMMWVWFVCSLVYYGLTLS), 327-347 (LNLALSGLAELPAYPLCMYLI), 356-376 (GSLAGFLCVGGGACLLIMLVP), 391-411 (TLSLLGKLNISAAFNIVYIYS), 424-444 (MGVCSMFSRIGGIIAPFIPAL), and 450-470 (ALPFIVFGAAGVSAGLLSLLL). The N-linked (GlcNAc...) asparagine glycan is linked to Asn-513.

The protein belongs to the major facilitator (TC 2.A.1) superfamily. Organic cation transporter (TC 2.A.1.19) family.

Its subcellular location is the membrane. Its function is as follows. Probably transports organic cations. This is Solute carrier family 22 member 15 (slc22a15) from Xenopus tropicalis (Western clawed frog).